Here is a 431-residue protein sequence, read N- to C-terminus: Adenylosuccinate synthetase (431 aa).

Residues 13–19 (GDEGKGK) and 41–43 (GHT) contribute to the GTP site. Asp14 acts as the Proton acceptor in catalysis. Mg(2+) is bound by residues Asp14 and Gly41. IMP is bound by residues 14 to 17 (DEGK), 39 to 42 (NAGH), Thr130, Arg144, Gln225, Thr240, and Arg304. Catalysis depends on His42, which acts as the Proton donor. A substrate-binding site is contributed by 300–306 (ATTGRAR). Residues Arg306, 332–334 (KLD), and 415–417 (STG) contribute to the GTP site.

This sequence belongs to the adenylosuccinate synthetase family. As to quaternary structure, homodimer. Requires Mg(2+) as cofactor.

It is found in the cytoplasm. It catalyses the reaction IMP + L-aspartate + GTP = N(6)-(1,2-dicarboxyethyl)-AMP + GDP + phosphate + 2 H(+). The protein operates within purine metabolism; AMP biosynthesis via de novo pathway; AMP from IMP: step 1/2. Functionally, plays an important role in the de novo pathway of purine nucleotide biosynthesis. Catalyzes the first committed step in the biosynthesis of AMP from IMP. This is Adenylosuccinate synthetase from Ectopseudomonas mendocina (strain ymp) (Pseudomonas mendocina).